A 317-amino-acid chain; its full sequence is tRNA(Met) cytidine acetate ligase (317 aa).

ATP contacts are provided by residues 6 to 19 (IAEY…HIYQ), G100, N157, and R182.

Belongs to the TmcAL family.

The protein resides in the cytoplasm. The catalysed reaction is cytidine(34) in elongator tRNA(Met) + acetate + ATP = N(4)-acetylcytidine(34) in elongator tRNA(Met) + AMP + diphosphate. Its function is as follows. Catalyzes the formation of N(4)-acetylcytidine (ac(4)C) at the wobble position of elongator tRNA(Met), using acetate and ATP as substrates. First activates an acetate ion to form acetyladenylate (Ac-AMP) and then transfers the acetyl group to tRNA to form ac(4)C34. The sequence is that of tRNA(Met) cytidine acetate ligase from Mesomycoplasma hyopneumoniae (strain J / ATCC 25934 / NCTC 10110) (Mycoplasma hyopneumoniae).